The chain runs to 1355 residues: Probable aldehyde oxidase 2 (1355 aa).

The 2Fe-2S ferredoxin-type domain maps to 9–96 (RPVVVTVNGE…HCAVTTSEGI (88 aa)). [2Fe-2S] cluster is bound by residues cysteine 48, cysteine 53, cysteine 56, and cysteine 78. An FAD-binding PCMH-type domain is found at 244–422 (VAVTGDGWFH…VSISIPDWGS (179 aa)). The tract at residues 544–577 (PENANVPNGSCTNGTANGSANSSPEKHSNVDSSD) is disordered. Polar residues predominate over residues 548–566 (NVPNGSCTNGTANGSANSS).

Belongs to the xanthine dehydrogenase family. Aldehyde oxidases (AO) are homodimers and heterodimers of AO subunits. [2Fe-2S] cluster serves as cofactor. The cofactor is FAD. It depends on Mo-molybdopterin as a cofactor.

The catalysed reaction is an aldehyde + O2 + H2O = a carboxylate + H2O2 + H(+). This Oryza sativa subsp. japonica (Rice) protein is Probable aldehyde oxidase 2.